A 142-amino-acid polypeptide reads, in one-letter code: Large ribosomal subunit protein uL13 (142 aa).

The protein belongs to the universal ribosomal protein uL13 family. As to quaternary structure, part of the 50S ribosomal subunit.

Its function is as follows. This protein is one of the early assembly proteins of the 50S ribosomal subunit, although it is not seen to bind rRNA by itself. It is important during the early stages of 50S assembly. The chain is Large ribosomal subunit protein uL13 from Erwinia tasmaniensis (strain DSM 17950 / CFBP 7177 / CIP 109463 / NCPPB 4357 / Et1/99).